The sequence spans 242 residues: Leucyl/phenylalanyl-tRNA--protein transferase (242 aa).

It belongs to the L/F-transferase family.

The protein resides in the cytoplasm. It catalyses the reaction N-terminal L-lysyl-[protein] + L-leucyl-tRNA(Leu) = N-terminal L-leucyl-L-lysyl-[protein] + tRNA(Leu) + H(+). It carries out the reaction N-terminal L-arginyl-[protein] + L-leucyl-tRNA(Leu) = N-terminal L-leucyl-L-arginyl-[protein] + tRNA(Leu) + H(+). The catalysed reaction is L-phenylalanyl-tRNA(Phe) + an N-terminal L-alpha-aminoacyl-[protein] = an N-terminal L-phenylalanyl-L-alpha-aminoacyl-[protein] + tRNA(Phe). Functions in the N-end rule pathway of protein degradation where it conjugates Leu, Phe and, less efficiently, Met from aminoacyl-tRNAs to the N-termini of proteins containing an N-terminal arginine or lysine. The polypeptide is Leucyl/phenylalanyl-tRNA--protein transferase (Edwardsiella ictaluri (strain 93-146)).